Consider the following 134-residue polypeptide: Ribosome-binding factor A (134 aa).

Belongs to the RbfA family. In terms of assembly, monomer. Binds 30S ribosomal subunits, but not 50S ribosomal subunits or 70S ribosomes.

It is found in the cytoplasm. Functionally, one of several proteins that assist in the late maturation steps of the functional core of the 30S ribosomal subunit. Associates with free 30S ribosomal subunits (but not with 30S subunits that are part of 70S ribosomes or polysomes). Required for efficient processing of 16S rRNA. May interact with the 5'-terminal helix region of 16S rRNA. In Rhizobium leguminosarum bv. trifolii (strain WSM2304), this protein is Ribosome-binding factor A.